Reading from the N-terminus, the 366-residue chain is tRNA-specific 2-thiouridylase MnmA (366 aa).

Residues 6–13 and Leu32 each bind ATP; that span reads AMSGGVDS. Cys101 serves as the catalytic Nucleophile. A disulfide bond links Cys101 and Cys197. ATP is bound at residue Gly125. An interaction with tRNA region spans residues 147–149; sequence KDQ. Cys197 (cysteine persulfide intermediate) is an active-site residue.

It belongs to the MnmA/TRMU family.

The protein localises to the cytoplasm. The catalysed reaction is S-sulfanyl-L-cysteinyl-[protein] + uridine(34) in tRNA + AH2 + ATP = 2-thiouridine(34) in tRNA + L-cysteinyl-[protein] + A + AMP + diphosphate + H(+). In terms of biological role, catalyzes the 2-thiolation of uridine at the wobble position (U34) of tRNA, leading to the formation of s(2)U34. The sequence is that of tRNA-specific 2-thiouridylase MnmA from Cutibacterium acnes (strain DSM 16379 / KPA171202) (Propionibacterium acnes).